We begin with the raw amino-acid sequence, 638 residues long: Threonine--tRNA ligase (638 aa).

The 61-residue stretch at 1–61 (MPVITLPDGS…DADAQLQIIT (61 aa)) folds into the TGS domain. A catalytic region spans residues 243 to 534 (DHRKIGKALN…LTEEFAGFFP (292 aa)). Positions 334, 385, and 511 each coordinate Zn(2+).

Belongs to the class-II aminoacyl-tRNA synthetase family. In terms of assembly, homodimer. Requires Zn(2+) as cofactor.

Its subcellular location is the cytoplasm. The enzyme catalyses tRNA(Thr) + L-threonine + ATP = L-threonyl-tRNA(Thr) + AMP + diphosphate + H(+). Functionally, catalyzes the attachment of threonine to tRNA(Thr) in a two-step reaction: L-threonine is first activated by ATP to form Thr-AMP and then transferred to the acceptor end of tRNA(Thr). Also edits incorrectly charged L-seryl-tRNA(Thr). This Alteromonas mediterranea (strain DSM 17117 / CIP 110805 / LMG 28347 / Deep ecotype) protein is Threonine--tRNA ligase.